The chain runs to 256 residues: Catechol O-methyltransferase A (256 aa).

The first 27 residues, methionine 1–alanine 27, serve as a signal peptide directing secretion. Asparagine 58 carries N-linked (GlcNAc...) asparagine glycosylation. S-adenosyl-L-methionine-binding residues include valine 84, serine 114, glutamate 132, and aspartate 183. Aspartate 183 contacts Mg(2+). Residue lysine 186 coordinates substrate. The Mg(2+) site is built by aspartate 211 and asparagine 212. Substrate is bound by residues asparagine 212 and glutamate 241.

The protein belongs to the class I-like SAM-binding methyltransferase superfamily. Cation-dependent O-methyltransferase family. Requires Mg(2+) as cofactor. Widely expressed. Has higher expression in females compared to males. Strongly expressed in liver and diencephalon. Expressed at lower levels in hindbrain, spinal cord, eye, telencephalon, spleen, gut, gill and muscle. Detected in ovary and testis. In eye, detected in all layers of the retina with highest expression in the inner nuclear layer. In gut, expressed in the lamina propria but has little or no expression in gut epithelium. In brain, has strongest expression near the midline of the telencephalon, in the periventricular gray zone of the optic tectum, in the preglomerular nucleus, and near the walls of the diencephalic ventricle.

The protein localises to the secreted. It catalyses the reaction a catechol + S-adenosyl-L-methionine = a guaiacol + S-adenosyl-L-homocysteine + H(+). Catalyzes the O-methylation, and thereby the inactivation, of catecholamine neurotransmitters and catechol hormones. Shows highest activity towards catecholestrogens and dobutamine. Also has lower activity towards L-DOPA, dopamine and epinephrine. Active towards the xenobiotic compounds methyl-DOPA, carbidopa, isoproterenol, and apomorphine. The polypeptide is Catechol O-methyltransferase A (Danio rerio (Zebrafish)).